A 246-amino-acid chain; its full sequence is Probable transcriptional regulatory protein YebC (246 aa).

The disordered stretch occupies residues 1–20; sequence MAGHSKWANTRHRKAAQDAK.

It belongs to the TACO1 family.

Its subcellular location is the cytoplasm. This Escherichia coli O6:K15:H31 (strain 536 / UPEC) protein is Probable transcriptional regulatory protein YebC.